Consider the following 599-residue polypeptide: Spermatogenesis-associated protein 7 (599 aa).

The disordered stretch occupies residues 163-205 (KSSKVITNGPEKNSSSSPSSVDYAASGPRKLSSGALYGRRPRS). The span at 166-175 (KVITNGPEKN) shows a compositional bias: polar residues.

Found in a complex with CFAP410, NEK1 and SPATA7. Interacts with NEK1. Interacts with RPGRIP1. Interacts with RPGR. Interacts with NPHP4. Interacts with NPHP1. Interacts with AHI1.

Its subcellular location is the cytoplasm. The protein resides in the cytoskeleton. It is found in the cilium axoneme. The protein localises to the cilium basal body. It localises to the cell projection. Its subcellular location is the cilium. The protein resides in the photoreceptor outer segment. Its function is as follows. Involved in the maintenance of both rod and cone photoreceptor cells. It is required for recruitment and proper localization of RPGRIP1 to the photoreceptor connecting cilium (CC), as well as photoreceptor-specific localization of proximal CC proteins at the distal CC. Maintenance of protein localization at the photoreceptor-specific distal CC is essential for normal microtubule stability and to prevent photoreceptor degeneration. In Homo sapiens (Human), this protein is Spermatogenesis-associated protein 7 (SPATA7).